Here is a 248-residue protein sequence, read N- to C-terminus: UDP-2,3-diacylglucosamine hydrolase (248 aa).

5 residues coordinate Mn(2+): D7, H9, D40, N78, and H113. 78 to 79 (NR) contributes to the substrate binding site. 5 residues coordinate substrate: D121, S159, T163, K166, and H194. Mn(2+)-binding residues include H194 and H196.

Belongs to the LpxH family. Requires Mn(2+) as cofactor.

The protein localises to the cell inner membrane. It carries out the reaction UDP-2-N,3-O-bis[(3R)-3-hydroxytetradecanoyl]-alpha-D-glucosamine + H2O = 2-N,3-O-bis[(3R)-3-hydroxytetradecanoyl]-alpha-D-glucosaminyl 1-phosphate + UMP + 2 H(+). Its pathway is glycolipid biosynthesis; lipid IV(A) biosynthesis; lipid IV(A) from (3R)-3-hydroxytetradecanoyl-[acyl-carrier-protein] and UDP-N-acetyl-alpha-D-glucosamine: step 4/6. Its function is as follows. Hydrolyzes the pyrophosphate bond of UDP-2,3-diacylglucosamine to yield 2,3-diacylglucosamine 1-phosphate (lipid X) and UMP by catalyzing the attack of water at the alpha-P atom. Involved in the biosynthesis of lipid A, a phosphorylated glycolipid that anchors the lipopolysaccharide to the outer membrane of the cell. This Pseudomonas syringae pv. syringae (strain B728a) protein is UDP-2,3-diacylglucosamine hydrolase.